We begin with the raw amino-acid sequence, 1234 residues long: DNA-directed RNA polymerase subunit beta (1234 aa).

The interval 1187–1234 (GREDAPPEEVYEEEYEEEPEELPEDIDFEPDNFDIDSEDLFMDDDYDG) is disordered. Residues 1192–1234 (PPEEVYEEEYEEEPEELPEDIDFEPDNFDIDSEDLFMDDDYDG) show a composition bias toward acidic residues.

It belongs to the RNA polymerase beta chain family. In terms of assembly, the RNAP catalytic core consists of 2 alpha, 1 beta, 1 beta' and 1 omega subunit. When a sigma factor is associated with the core the holoenzyme is formed, which can initiate transcription.

The enzyme catalyses RNA(n) + a ribonucleoside 5'-triphosphate = RNA(n+1) + diphosphate. Its function is as follows. DNA-dependent RNA polymerase catalyzes the transcription of DNA into RNA using the four ribonucleoside triphosphates as substrates. The chain is DNA-directed RNA polymerase subunit beta from Caldanaerobacter subterraneus subsp. tengcongensis (strain DSM 15242 / JCM 11007 / NBRC 100824 / MB4) (Thermoanaerobacter tengcongensis).